The primary structure comprises 209 residues: MRFSLLALLGTIVATSVSALKEPPTQLQVGVKKRIPASECTRKSHSGDELSMHYTGTLFDTGEKFDSSLDRNEPFVFTLGAGQVIQGWDQGLLGMCVGEKRRLVIPPHLGYGERGAGGVIPGGATLVFEVELLEIKPGKYNQKAMPVQQQQESPISFTSPSFLVSTGIIVALFLIVFKMAKKQDIAEANEKAAAATAEASTEKKEEKKE.

The first 19 residues, 1 to 19, serve as a signal peptide directing secretion; it reads MRFSLLALLGTIVATSVSA. The PPIase FKBP-type domain occupies 47–136; the sequence is GDELSMHYTG…VFEVELLEIK (90 aa). The chain crosses the membrane as a helical span at residues 157 to 177; sequence FTSPSFLVSTGIIVALFLIVF. Positions 178 to 207 form a coiled coil; sequence KMAKKQDIAEANEKAAAATAEASTEKKEEK. A disordered region spans residues 190–209; the sequence is EKAAAATAEASTEKKEEKKE. The segment covering 200–209 has biased composition (basic and acidic residues); that stretch reads STEKKEEKKE.

This sequence belongs to the FKBP-type PPIase family. FKBP2 subfamily.

It is found in the membrane. The enzyme catalyses [protein]-peptidylproline (omega=180) = [protein]-peptidylproline (omega=0). With respect to regulation, inhibited by both FK506 and rapamycin. Functionally, PPIases accelerate the folding of proteins. It catalyzes the cis-trans isomerization of proline imidic peptide bonds in oligopeptides. The polypeptide is FK506-binding protein 2B (FKBP3) (Rhizopus delemar (strain RA 99-880 / ATCC MYA-4621 / FGSC 9543 / NRRL 43880) (Mucormycosis agent)).